We begin with the raw amino-acid sequence, 206 residues long: Small ribosomal subunit protein uS4 (206 aa).

The 65-residue stretch at 96 to 160 folds into the S4 RNA-binding domain; that stretch reads CRLDNVVYRM…AQLRIVQALE (65 aa).

This sequence belongs to the universal ribosomal protein uS4 family. Part of the 30S ribosomal subunit. Contacts protein S5. The interaction surface between S4 and S5 is involved in control of translational fidelity.

In terms of biological role, one of the primary rRNA binding proteins, it binds directly to 16S rRNA where it nucleates assembly of the body of the 30S subunit. Its function is as follows. With S5 and S12 plays an important role in translational accuracy. This Pseudomonas putida (strain GB-1) protein is Small ribosomal subunit protein uS4.